The primary structure comprises 430 residues: MEKYDLLIKNVLIPEKEGEWDIAVKDGKIEKIGKNIVGEAKYTINGKGKIAFPSFANMHTHISMTLLRGLGADLPLHDWLQKVIWPLEGEFVSPEFVKDGALLGIVESIRSGTTLFMDMYFFEEAVAEACEDVGIRAGLGFGILDFPTKVAKTPEEYIQRARKFAEEFKNRELVFPVICPHAPYTCSPNTLRMAKELADEYGLLLHIHVAETKEEVERIKEQYGKTPVEHLESIGFLDKNVLCAHMVWTTEKEREILKERDVKIAHCPESNLKLASGIAPVPDYVKRGITVTLGTDGAASNDNLNMLEETSTCAKFHKGYNLDAKAIDAGTALKIATENGFKVAGIKAGKVEEGYEADLILVDTDFPEFQPLYDPISQFVYSANSECIDTVICKGKVLMEKRELKTVDQEEIFAKARKWREKILSKLSSL.

2 residues coordinate Zn(2+): H59 and H61. Substrate is bound by residues E88 and H181. Residue H208 participates in Zn(2+) binding. Positions 211 and 296 each coordinate substrate. D296 is a binding site for Zn(2+).

This sequence belongs to the metallo-dependent hydrolases superfamily. MTA/SAH deaminase family. The cofactor is Zn(2+).

The catalysed reaction is S-adenosyl-L-homocysteine + H2O + H(+) = S-inosyl-L-homocysteine + NH4(+). It catalyses the reaction S-methyl-5'-thioadenosine + H2O + H(+) = S-methyl-5'-thioinosine + NH4(+). In terms of biological role, catalyzes the deamination of 5-methylthioadenosine and S-adenosyl-L-homocysteine into 5-methylthioinosine and S-inosyl-L-homocysteine, respectively. Is also able to deaminate adenosine. In Aquifex aeolicus (strain VF5), this protein is 5-methylthioadenosine/S-adenosylhomocysteine deaminase.